We begin with the raw amino-acid sequence, 316 residues long: NADH-cytochrome b5 reductase-like (316 aa).

The Oxidoreductase-like domain occupies 17–53 (KPVEPLPSQCCGSGCSPCVFDLYYRDLERWETARARN). The FAD-binding FR-type domain maps to 76–178 (ETFLAFHIST…RGPFGSFLYE (103 aa)). FAD contacts are provided by residues 158-173 (ESWRTGDTAFWRGPFG) and 183-215 (GELLMLAAGTGLAPMVPILQSITDDEDDETFVT).

Belongs to the flavoprotein pyridine nucleotide cytochrome reductase family. Requires FAD as cofactor.

The enzyme catalyses 2 Fe(III)-[cytochrome b5] + NADH = 2 Fe(II)-[cytochrome b5] + NAD(+) + H(+). Functionally, NADH-cytochrome b5 reductases are involved in desaturation and elongation of fatty acids, cholesterol biosynthesis, drug metabolism, and, in erythrocyte, methemoglobin reduction. This Mus musculus (Mouse) protein is NADH-cytochrome b5 reductase-like (Cyb5rl).